The chain runs to 623 residues: DNA-directed RNA polymerase subunit beta' (623 aa).

4 residues coordinate Zn(2+): Cys70, Cys72, Cys85, and Cys88. Residues Asp466, Asp468, and Asp470 each contribute to the Mg(2+) site.

Belongs to the RNA polymerase beta' chain family. RpoC1 subfamily. In terms of assembly, in plastids the minimal PEP RNA polymerase catalytic core is composed of four subunits: alpha, beta, beta', and beta''. When a (nuclear-encoded) sigma factor is associated with the core the holoenzyme is formed, which can initiate transcription. It depends on Mg(2+) as a cofactor. The cofactor is Zn(2+).

Its subcellular location is the plastid. It is found in the chloroplast. The catalysed reaction is RNA(n) + a ribonucleoside 5'-triphosphate = RNA(n+1) + diphosphate. In terms of biological role, DNA-dependent RNA polymerase catalyzes the transcription of DNA into RNA using the four ribonucleoside triphosphates as substrates. This Guillardia theta (Cryptophyte) protein is DNA-directed RNA polymerase subunit beta'.